A 271-amino-acid chain; its full sequence is Phthiotriol/phenolphthiotriol dimycocerosates methyltransferase 1 (271 aa).

The protein belongs to the methyltransferase superfamily. Phthiotriol/phenolphthiotriol dimycocerosates methyltransferase family.

Its function is as follows. Catalyzes the methylation of the lipid moiety of the intermediate compounds phthiotriol and glycosylated phenolphthiotriol dimycoserosates to form phthiocerol dimycocerosates (DIM A) and glycosylated phenolphthiocerol dimycocerosates (PGL). The protein is Phthiotriol/phenolphthiotriol dimycocerosates methyltransferase 1 of Mycobacterium ulcerans (strain Agy99).